The chain runs to 396 residues: Tryptophan synthase beta chain (396 aa).

Residue lysine 86 is modified to N6-(pyridoxal phosphate)lysine.

This sequence belongs to the TrpB family. Tetramer of two alpha and two beta chains. Pyridoxal 5'-phosphate is required as a cofactor.

It carries out the reaction (1S,2R)-1-C-(indol-3-yl)glycerol 3-phosphate + L-serine = D-glyceraldehyde 3-phosphate + L-tryptophan + H2O. The protein operates within amino-acid biosynthesis; L-tryptophan biosynthesis; L-tryptophan from chorismate: step 5/5. In terms of biological role, the beta subunit is responsible for the synthesis of L-tryptophan from indole and L-serine. This chain is Tryptophan synthase beta chain, found in Francisella tularensis subsp. holarctica (strain FTNF002-00 / FTA).